The primary structure comprises 253 residues: MVSSFTSAPRSGFYYFAQGWKLVLQPGIRRFVILPLLVNILLMGGAFWWLFTQLDVWIPTLMSYVPDWLQWLSYLLWPLAVISVLLVFGYFFSTIANWIAAPFNGLLAEQLEARLTGATPPDTGIFGIMKDVPRIMKREWQKFAWYLPRAIVLLILYFIPGIGQTVAPVLWFLFSAWMLAIQYCDYPFDNHKVPFKEMRTALRTRKITNMQFGALTSLFTMIPLLNLFIMPVAVCGATAMWVDCYRDKHAMWR.

4 consecutive transmembrane segments (helical) span residues 31–51 (FVIL…WWLF), 75–95 (LLWP…FSTI), 151–171 (IVLL…PVLW), and 222–242 (IPLL…AMWV).

Belongs to the CysZ family.

Its subcellular location is the cell inner membrane. Functionally, high affinity, high specificity proton-dependent sulfate transporter, which mediates sulfate uptake. Provides the sulfur source for the cysteine synthesis pathway. This chain is Sulfate transporter CysZ, found in Escherichia coli O81 (strain ED1a).